We begin with the raw amino-acid sequence, 419 residues long: MNAEILAVGSELLLGQITNTNARFISNQLSELGINVFYHTVVGDNAKRLEQAIEVAESRADLIIFSGGLGPTKDDLTKETIARHLGVSLEFDEVALTYIEQFFAKRGRPMTENNRKQALILAGSEILANHHGMAPGMIFNNNNHTYILLPGPPKELEPMFQFEAKPKLAAMLNDGGIIASHVMRFYGIGEAELEVQVQDILDAQTNPTVAPLASDGEVTLRVTAKAETEQQAQQLIAAKVAEIQALVGDYQYGMDDDSLASKTVEMLLDNHLTISAAESLTAGLFQSELAEIPGVGDALIGGVVTYAAEAKVKHLGISQELIDTHGVVSGECAAAMASAVRKQFGTNIGIGLTGEAGPTAHDHQPVGTVWIGIAINDEEPLTYLLHLSGMRNTNRLRAVKFTCHYLMQLLEERGYTKRY.

It belongs to the CinA family.

The chain is Putative competence-damage inducible protein from Lysinibacillus sphaericus (strain C3-41).